A 209-amino-acid chain; its full sequence is Ribosomal RNA large subunit methyltransferase E (209 aa).

The S-adenosyl-L-methionine site is built by glycine 63, tryptophan 65, aspartate 83, aspartate 99, and aspartate 124. Residue lysine 164 is the Proton acceptor of the active site.

Belongs to the class I-like SAM-binding methyltransferase superfamily. RNA methyltransferase RlmE family.

The protein localises to the cytoplasm. It catalyses the reaction uridine(2552) in 23S rRNA + S-adenosyl-L-methionine = 2'-O-methyluridine(2552) in 23S rRNA + S-adenosyl-L-homocysteine + H(+). In terms of biological role, specifically methylates the uridine in position 2552 of 23S rRNA at the 2'-O position of the ribose in the fully assembled 50S ribosomal subunit. This chain is Ribosomal RNA large subunit methyltransferase E, found in Shewanella oneidensis (strain ATCC 700550 / JCM 31522 / CIP 106686 / LMG 19005 / NCIMB 14063 / MR-1).